Consider the following 253-residue polypeptide: Beta-crystallin B1 (253 aa).

Low complexity predominate over residues 1-18 (MSQPAAKASATAAVNPGP). A disordered region spans residues 1-53 (MSQPAAKASATAAVNPGPDGKGKAGPPPGPAPGSGPAPAPAPAPAQPAPAAKA). An N-acetylserine modification is found at Ser2. The N-terminal arm stretch occupies residues 2 to 59 (SQPAAKASATAAVNPGPDGKGKAGPPPGPAPGSGPAPAPAPAPAQPAPAAKAELPPGS). Residues 25-47 (GPPPGPAPGSGPAPAPAPAPAQP) are compositionally biased toward pro residues. Beta/gamma crystallin 'Greek key' domains are found at residues 60–99 (YKLV…IVTS) and 100–144 (GPWV…RPIK). The tract at residues 145 to 149 (MDAQE) is connecting peptide. 2 Beta/gamma crystallin 'Greek key' domains span residues 150–191 (HKLC…RVSS) and 192–234 (GTWV…RRLR). Positions 236 to 253 (RQWHREGCFPVLAAEPPK) are C-terminal arm.

Belongs to the beta/gamma-crystallin family. In terms of assembly, homo/heterodimer, or complexes of higher-order. The structure of beta-crystallin oligomers seems to be stabilized through interactions between the N-terminal arms. Post-translationally, specific cleavages in the N-terminal arm occur during lens maturation and give rise to truncated forms, leading to impaired oligomerization and protein insolubilization.

Its function is as follows. Crystallins are the dominant structural components of the vertebrate eye lens. The polypeptide is Beta-crystallin B1 (CRYBB1) (Bos taurus (Bovine)).